The sequence spans 1451 residues: Protein clueless (1451 aa).

2 disordered regions span residues 1 to 101 (MALE…EYAA) and 264 to 286 (KKTR…VSEP). Low complexity predominate over residues 9–53 (NSNATATGDATATKASSKAKENNNTAGGKKNLNPIPSQQNSNQNL). Residues 66–75 (GKKKGKKNRN) are compositionally biased toward basic residues. Ser-270 carries the phosphoserine modification. In terms of domain architecture, Clu spans 424–666 (RAEDAFSSKL…RTFPPDVNFL (243 aa)). Disordered stretches follow at residues 722-775 (AKKQ…ESKT), 961-1012 (AVSS…SSVS), and 1413-1451 (ANNN…ATSS). Over residues 748–758 (GADKTDVKEEK) the composition is skewed to basic and acidic residues. The span at 969–984 (KKRGNGGKHNKHKSSK) shows a compositional bias: basic residues. The span at 989-1010 (QQQQQTTGNQNGSSSGTSNGSS) shows a compositional bias: low complexity.

Belongs to the CLU family.

The protein resides in the cytoplasm. In terms of biological role, mRNA-binding protein involved in proper cytoplasmic distribution of mitochondria. This is Protein clueless from Drosophila yakuba (Fruit fly).